We begin with the raw amino-acid sequence, 461 residues long: Trigger factor (461 aa).

Residues 166-245 (GDFANIDLTA…VNSVKAEELP (80 aa)) form the PPIase FKBP-type domain.

This sequence belongs to the FKBP-type PPIase family. Tig subfamily.

The protein resides in the cytoplasm. The enzyme catalyses [protein]-peptidylproline (omega=180) = [protein]-peptidylproline (omega=0). Functionally, involved in protein export. Acts as a chaperone by maintaining the newly synthesized protein in an open conformation. Functions as a peptidyl-prolyl cis-trans isomerase. This chain is Trigger factor, found in Bifidobacterium animalis subsp. lactis (strain AD011).